The following is a 105-amino-acid chain: ESCEYTCGSTCYWSSDVSAAKAKGYSLYESGDTIDDYPHGYHDYEGFDFPVSGTYYEYPIMSDYDVYTGGSPGADRVIFNGDDELAGVITHTGASGDDFVACSSS.

2 disulfides stabilise this stretch: Cys-3–Cys-11 and Cys-7–Cys-102. His-39 is an active-site residue. Glu-57 serves as the catalytic Proton acceptor. His-91 serves as the catalytic Proton donor.

It belongs to the ribonuclease N1/T1 family.

The catalysed reaction is [RNA] containing guanosine + H2O = an [RNA fragment]-3'-guanosine-3'-phosphate + a 5'-hydroxy-ribonucleotide-3'-[RNA fragment].. This Aspergillus phoenicis (Aspergillus saitoi) protein is Guanyl-specific ribonuclease Ms.